A 308-amino-acid polypeptide reads, in one-letter code: Transcription initiation factor TFIID subunit 8 (308 aa).

The tract at residues 1-29 (MADTAAGPGGSGTRPGSKQSTNPADNYHL) is disordered. Ala2 carries the N-acetylalanine modification. Residues 14-24 (RPGSKQSTNPA) are compositionally biased toward polar residues. One can recognise a Histone-fold domain in the interval 35-102 (LQVVVSSLLT…VTLVEMGFNV (68 aa)). Thr128 is subject to Phosphothreonine. The span at 235–248 (MEETDSSEQEEQTD) shows a compositional bias: acidic residues. The tract at residues 235–308 (MEETDSSEQE…PKIRRKKSLS (74 aa)) is disordered. Low complexity predominate over residues 268–281 (ASVLQQSSSLSGSR). Position 269 is a phosphoserine (Ser269). A Nuclear localization signal motif is present at residues 292–305 (YLRPVKKPKIRRKK). Residues 295 to 308 (PVKKPKIRRKKSLS) are compositionally biased toward basic residues.

The protein belongs to the TAF8 family. As to quaternary structure, component of the TFIID basal transcription factor complex, composed of TATA-box-binding protein TBP, and a number of TBP-associated factors (TAFs), including TAF1, TAF2, TAF3, TAF4, TAF5, TAF6, TAF7, TAF8, TAF9, TAF10, TAF11, TAF12 and TAF13. Interacts with TBP, TAF1, TAF6, TAF10, TAF11 and TAF13. Component also of a small TAF complex (SMAT) containing TAF8, TAF10 and SUPT7L. Forms a heterodimer with TAF10. Interaction with TAF10 is mediated mainly via its histone fold domain while interaction with SUPT7L is via its C-terminal region. In terms of tissue distribution, low level of expression throughout the brain with slightly higher expression in the hippocampus.

The protein resides in the nucleus. Its subcellular location is the cytoplasm. Functionally, the TFIID basal transcription factor complex plays a major role in the initiation of RNA polymerase II (Pol II)-dependent transcription. TFIID recognizes and binds promoters with or without a TATA box via its subunit TBP, a TATA-box-binding protein, and promotes assembly of the pre-initiation complex (PIC). The TFIID complex consists of TBP and TBP-associated factors (TAFs), including TAF1, TAF2, TAF3, TAF4, TAF5, TAF6, TAF7, TAF8, TAF9, TAF10, TAF11, TAF12 and TAF13. The TFIID complex structure can be divided into 3 modules TFIID-A, TFIID-B, and TFIID-C. TAF8 is involved in forming the TFIID-B module, together with TAF5. Mediates both basal and activator-dependent transcription. Plays a role in the differentiation of preadipocyte fibroblasts to adipocytes, however, does not seem to play a role in differentiation of myoblasts. Required for the integration of TAF10 in the TAF complex. May be important for survival of cells of the inner cell mass which constitute the pluripotent cell population of the early embryo. The sequence is that of Transcription initiation factor TFIID subunit 8 (Taf8) from Mus musculus (Mouse).